Reading from the N-terminus, the 545-residue chain is Calcium-dependent protein kinase 10 (545 aa).

The disordered stretch occupies residues 1–36 (MGNCNACVRPDSKESKPSSKPKKPNRDRKLNPFAGD). Residue Gly2 is the site of N-myristoyl glycine attachment. One can recognise a Protein kinase domain in the interval 63–321 (YILGRELGRG…AQQVLAHPWI (259 aa)). Residues 69–77 (LGRGEFGIT) and Lys92 contribute to the ATP site. The active-site Proton acceptor is the Asp187. Ser227 bears the Phosphoserine mark. Residues 327–357 (APNVPLGDIVRSRLKQFSMMNRFKKKVLRVI) form an autoinhibitory domain region. 4 consecutive EF-hand domains span residues 364–399 (QEVEVIKNMFSLMDDDKDGKITYPELKAGLQKVGSQ), 400–435 (LGEPEIKMLMEVADVDGNGFLDYGEFVAVIIHLQKI), 436–471 (ENDELFKLAFMFFDKDGSTYIELDELREALADELGE), and 472–507 (PDASVLSDIMREVDTDKDGRINYDEFVTMMKAGTDW). The Ca(2+) site is built by Asp377, Asp379, Asp381, Lys383, Glu388, Asp413, Asp415, Asn417, Glu424, Asp449, Asp451, Ser453, Tyr455, Glu460, Asp485, Asp487, Asp489, Arg491, and Glu496.

Belongs to the protein kinase superfamily. Ser/Thr protein kinase family. CDPK subfamily.

The protein localises to the membrane. It carries out the reaction L-seryl-[protein] + ATP = O-phospho-L-seryl-[protein] + ADP + H(+). The catalysed reaction is L-threonyl-[protein] + ATP = O-phospho-L-threonyl-[protein] + ADP + H(+). Its activity is regulated as follows. Activated by calcium. Autophosphorylation may play an important role in the regulation of the kinase activity. May play a role in signal transduction pathways that involve calcium as a second messenger. May be a positive regulator controlling stress signal transduction. This Arabidopsis thaliana (Mouse-ear cress) protein is Calcium-dependent protein kinase 10 (CPK10).